We begin with the raw amino-acid sequence, 77 residues long: U11-lycotoxin-Ls1a (77 aa).

The first 20 residues, 1–20 (MKLIILTGLVLFAIVSFIEA), serve as a signal peptide directing secretion. The propeptide occupies 21–26 (EEETGR).

This sequence belongs to the neurotoxin 19 (CSTX) family. 10 (U11-Lctx) subfamily. In terms of processing, contains 4 disulfide bonds. As to expression, expressed by the venom gland.

It is found in the secreted. This is U11-lycotoxin-Ls1a from Lycosa singoriensis (Wolf spider).